A 252-amino-acid chain; its full sequence is ATP synthase subunit a (252 aa).

The next 6 helical transmembrane spans lie at 29–49 (FTNV…FLFI), 87–107 (FFPL…IGLF), 116–136 (QIMI…GYGF), 146–166 (LFVP…IEVI), 183–205 (MLAG…ELGI), and 219–239 (VAIT…FTVL).

Belongs to the ATPase A chain family. F-type ATPases have 2 components, CF(1) - the catalytic core - and CF(0) - the membrane proton channel. CF(1) has five subunits: alpha(3), beta(3), gamma(1), delta(1), epsilon(1). CF(0) has three main subunits: a(1), b(2) and c(9-12). The alpha and beta chains form an alternating ring which encloses part of the gamma chain. CF(1) is attached to CF(0) by a central stalk formed by the gamma and epsilon chains, while a peripheral stalk is formed by the delta and b chains.

Its subcellular location is the cell inner membrane. Functionally, key component of the proton channel; it plays a direct role in the translocation of protons across the membrane. The chain is ATP synthase subunit a from Bartonella quintana (strain Toulouse) (Rochalimaea quintana).